Reading from the N-terminus, the 667-residue chain is Probable endo-1,3(4)-beta-glucanase AFLA_105200 (667 aa).

The N-terminal stretch at 1–24 (MSSSSFVWTVGSIALSSLITPTIA) is a signal peptide. The GH16 domain maps to 25–288 (DGSGSRYQLT…WAGGVFGDSG (264 aa)). Asparagine 63 carries N-linked (GlcNAc...) asparagine glycosylation. The Nucleophile role is filled by glutamate 144. The active-site Proton donor is glutamate 149. Composition is skewed to polar residues over residues 354–363 (VPSVTSTPIL) and 379–394 (ATSS…QTSV). Disordered stretches follow at residues 354-427 (VPSV…ADAV) and 448-646 (GTIQ…AGAS). Composition is skewed to low complexity over residues 395-427 (AGAE…ADAV), 448-483 (GTIQ…SQEP), and 574-622 (APTS…EATA). The segment covering 623–637 (PTETDSGASTGTNPE) has biased composition (polar residues). Glycine 644 carries GPI-anchor amidated glycine lipidation. Positions 645-667 (ASKSVGISGLAGIVCGIAMAMLA) are cleaved as a propeptide — removed in mature form.

The protein belongs to the glycosyl hydrolase 16 family.

It is found in the cell membrane. It catalyses the reaction Endohydrolysis of (1-&gt;3)- or (1-&gt;4)-linkages in beta-D-glucans when the glucose residue whose reducing group is involved in the linkage to be hydrolyzed is itself substituted at C-3.. In terms of biological role, mixed-linked glucanase involved in the degradation of complex natural cellulosic substrates. This Aspergillus flavus (strain ATCC 200026 / FGSC A1120 / IAM 13836 / NRRL 3357 / JCM 12722 / SRRC 167) protein is Probable endo-1,3(4)-beta-glucanase AFLA_105200.